We begin with the raw amino-acid sequence, 65 residues long: Large ribosomal subunit protein bL35 (65 aa).

The segment covering 1 to 16 has biased composition (basic residues); it reads MVPKQKTHSGAKKRFK. The disordered stretch occupies residues 1–39; it reads MVPKQKTHSGAKKRFKLTGSGSVSRARAGMRHNFEHRSS.

It belongs to the bacterial ribosomal protein bL35 family.

This is Large ribosomal subunit protein bL35 from Tropheryma whipplei (strain TW08/27) (Whipple's bacillus).